The sequence spans 301 residues: MSRGLIVICGATATGKTALALEIAQSLNSIIISADSRQVYREFDIGTAKPTPAEQDLIPHYLIDICDPRETLTLAEYQEKAQSLIDKNLTNFPLLVGGTGLYIKSIVKGLKIPRVAPQPRLRFQLEALGQQQCYQILQQVDTISSQKIHPNDQVRTLRALEVFYVTGIPISQQQGENPPTYPIVQIGLDCSTEELKRRIEIRTKKMLEMGFVEEVEKLVKKYGWELPLFKTLGYAEILNYLQGKLSLSEAEREIILHTRQFAKRQRTWFRAYPEIEWFDTTSPDLVENVFSKLTETLGLLN.

An ATP-binding site is contributed by 10 to 17 (GATATGKT). 12–17 (TATGKT) contributes to the substrate binding site. Positions 35–38 (DSRQ) are interaction with substrate tRNA.

This sequence belongs to the IPP transferase family. As to quaternary structure, monomer. Mg(2+) is required as a cofactor.

The enzyme catalyses adenosine(37) in tRNA + dimethylallyl diphosphate = N(6)-dimethylallyladenosine(37) in tRNA + diphosphate. In terms of biological role, catalyzes the transfer of a dimethylallyl group onto the adenine at position 37 in tRNAs that read codons beginning with uridine, leading to the formation of N6-(dimethylallyl)adenosine (i(6)A). The chain is tRNA dimethylallyltransferase from Crocosphaera subtropica (strain ATCC 51142 / BH68) (Cyanothece sp. (strain ATCC 51142)).